Consider the following 311-residue polypeptide: MADVMNVGVNLEAFSQAINAIQALRSSVTRVFDFLKDGMKNKETLESREKVFITEFQENLQSVNRDLNELERLSTLVGRPSESHPLHNSGLLSLDPVQDKTPLYSQLLQAYKWSNKLQYHAGLASSLLNQQSLKRSANQMGTSAKRRPKVQPSTLALPTQYVDDVISRIGRMFPDMSIELFRPNGTSAVLLVTLGKVLKAIVVMRSLFIDRTIVRGFHENIYTEDRKLDIWSKSNYQAFQKVTDHATTALLHYQLPQMPDVVVRSFMTWLRSYIKLFQTPCQRCGKYLQEGLPPTWRDFRTLEAFHDTCRQ.

Belongs to the Mediator complex subunit 27 family. In terms of assembly, component of the Mediator complex.

The protein resides in the nucleus. Its function is as follows. Component of the Mediator complex, a coactivator involved in the regulated transcription of nearly all RNA polymerase II-dependent genes. Mediator functions as a bridge to convey information from gene-specific regulatory proteins to the basal RNA polymerase II transcription machinery. Mediator is recruited to promoters by direct interactions with regulatory proteins and serves as a scaffold for the assembly of a functional preinitiation complex with RNA polymerase II and the general transcription factors. Required for the development of dopaminergic amacrine cells in the retina. May also negatively regulate the development of rod photoreceptor cells. This chain is Mediator of RNA polymerase II transcription subunit 27 (med27), found in Danio rerio (Zebrafish).